Here is a 203-residue protein sequence, read N- to C-terminus: Phospho-2-dehydro-3-deoxyheptonate aldolase (203 aa).

Positions 1 to 10 (MIDRLVRDSR) are enriched in basic and acidic residues. Positions 1–28 (MIDRLVRDSRGPVTERNPPHMSLSAGPA) are disordered.

This sequence belongs to the class-I DAHP synthase family.

The catalysed reaction is D-erythrose 4-phosphate + phosphoenolpyruvate + H2O = 7-phospho-2-dehydro-3-deoxy-D-arabino-heptonate + phosphate. It participates in metabolic intermediate biosynthesis; chorismate biosynthesis; chorismate from D-erythrose 4-phosphate and phosphoenolpyruvate: step 1/7. Stereospecific condensation of phosphoenolpyruvate (PEP) and D-erythrose-4-phosphate (E4P) giving rise to 3-deoxy-D-arabino-heptulosonate-7-phosphate (DAHP). In Amycolatopsis methanolica, this protein is Phospho-2-dehydro-3-deoxyheptonate aldolase (aroA).